We begin with the raw amino-acid sequence, 283 residues long: Diaminopimelate epimerase (283 aa).

Substrate is bound by residues N13 and N67. Residue C76 is the Proton donor of the active site. Residues 77–78, N166, N199, and 217–218 each bind substrate; these read GN and ER. The Proton acceptor role is filled by C226. 227–228 contributes to the substrate binding site; that stretch reads GT.

The protein belongs to the diaminopimelate epimerase family. As to quaternary structure, homodimer.

Its subcellular location is the cytoplasm. It carries out the reaction (2S,6S)-2,6-diaminopimelate = meso-2,6-diaminopimelate. It participates in amino-acid biosynthesis; L-lysine biosynthesis via DAP pathway; DL-2,6-diaminopimelate from LL-2,6-diaminopimelate: step 1/1. Its function is as follows. Catalyzes the stereoinversion of LL-2,6-diaminopimelate (L,L-DAP) to meso-diaminopimelate (meso-DAP), a precursor of L-lysine and an essential component of the bacterial peptidoglycan. The chain is Diaminopimelate epimerase from Desulforapulum autotrophicum (strain ATCC 43914 / DSM 3382 / VKM B-1955 / HRM2) (Desulfobacterium autotrophicum).